The chain runs to 281 residues: Ras-related protein Rab-40C (281 aa).

4 residues coordinate GTP: Ser-23, Gly-26, Lys-27, and Ser-46. Positions 41–49 are switch-I; it reads SPYAYSNGI. Residues Ser-46 and Asp-69 each coordinate Mg(2+). 3 residues coordinate GTP: Gly-72, Asn-126, and Arg-127. Residues 72–88 are switch-II; the sequence is GQGRFCTIFRSYSRGAQ. Residues 175–228 form the SOCS box domain; that stretch reads LMRHGMEKIWRPNRVFSLQDLCCRAIVSCTPVHLIDKLPLPVTIKSHLKSFSMA. Residues 245 to 281 form a disordered region; it reads SGAGGSGSKGNSLKRSKSIRPPQSPPQNCSRSNCKIS. Over residues 270-281 the composition is skewed to polar residues; sequence PQNCSRSNCKIS. A lipid anchor (S-palmitoyl cysteine) is attached at Cys-273. Cys-278 carries the S-geranylgeranyl cysteine lipid modification.

The protein belongs to the small GTPase superfamily. Rab family. As to quaternary structure, component of the cullin-5-RING E3 ubiquitin-protein ligase complex (ECS(RAB40C) complex) composed of CUL5, Elongin BC (ELOB and ELOC), RNF7/RBX2 and RAB40C. Interacts with protein phosphatase 6 (PP6) complex components ANKRD28, ANKRD52, PPP6C, PP6R1 and PP6R2; the interaction leads to ANKRD28 ubiquitination and decreased PP6 activity. Interacts with DAB2IP; DAB2IP acts as a GAP for RAB40C. Mg(2+) is required as a cofactor.

It localises to the cell membrane. It is found in the cytoplasm. Its subcellular location is the cytosol. The protein resides in the golgi apparatus membrane. The catalysed reaction is GTP + H2O = GDP + phosphate + H(+). It functions in the pathway protein modification; protein ubiquitination. With respect to regulation, regulated by guanine nucleotide exchange factors (GEFs) which promote the exchange of bound GDP for free GTP. Regulated by GTPase activating proteins (GAPs) including DAB2IP, which increase the GTP hydrolysis activity. Inhibited by GDP dissociation inhibitors (GDIs). In terms of biological role, RAB40C small GTPase acts as substrate-recognition component of the ECS(RAB40C) E3 ubiquitin ligase complex which mediates the ubiquitination and subsequent proteasomal degradation of target proteins. The Rab40 subfamily belongs to the Rab family that are key regulators of intracellular membrane trafficking, from the formation of transport vesicles to their fusion with membranes. Rabs cycle between an inactive GDP-bound form and an active GTP-bound form that is able to recruit to membranes different sets of downstream effectors directly responsible for vesicle formation, movement, tethering and fusion. As part of the ECS(RAB40C) complex, mediates ANKRD28 ubiquitination and degradation, thereby inhibiting protein phosphatase 6 (PP6) complex activity and focal adhesion assembly during cell migration. Also negatively regulate lipid droplets accumulation in a GTP-dependent manner. The polypeptide is Ras-related protein Rab-40C (Mus musculus (Mouse)).